The chain runs to 507 residues: Maturase K (507 aa).

This sequence belongs to the intron maturase 2 family. MatK subfamily.

It is found in the plastid. It localises to the chloroplast. Its function is as follows. Usually encoded in the trnK tRNA gene intron. Probably assists in splicing its own and other chloroplast group II introns. This chain is Maturase K, found in Euryale ferox (Gorgon plant).